Reading from the N-terminus, the 921-residue chain is Retinoblastoma-associated protein (921 aa).

Disordered regions lie at residues 1–31 (MPPK…PPGG) and 603–634 (RSPK…QKPQ). Residues 612–634 (HPQSGTSNPDAQPSATSQTQKPQ) show a composition bias toward polar residues. Residues 853-869 (KRSAEPSDAPKPLKRLR) carry the Bipartite nuclear localization signal motif. The segment at 873–921 (EGQDEADGGKHLPQESKFQQKLAEMTSTRTRMQKQKLNDGNDTSANEEK) is disordered. A compositionally biased stretch (polar residues) spans 910–921 (NDGNDTSANEEK).

Belongs to the retinoblastoma protein (RB) family. As to quaternary structure, interacts with and sequesters the E2F1 transcription factor, thereby inhibiting E2F1 transcription. Interacts with SUV39H1, KMT5B and KMT5C. In terms of assembly, (Microbial infection) Interacts with, and is inhibited by fowl adenovirus 1 protein GAM-1. Phosphorylated in G1, thereby releasing E2F1 which is then able to activate cell growth. Dephosphorylated at the late M phase. Phosphorylation of domain C promotes interaction between the C-terminal domain C and the Pocket domain, and thereby inhibits interactions with heterodimeric E2F/DP transcription factor complexes.

The protein localises to the nucleus. It is found in the cytoplasm. In terms of biological role, tumor suppressor that is a key regulator of the G1/S transition of the cell cycle. The hypophosphorylated form binds transcription regulators of the E2F family, preventing transcription of E2F-responsive genes. Both physically blocks E2Fs transactivating domain and recruits chromatin-modifying enzymes that actively repress transcription. Cyclin and CDK-dependent phosphorylation of RB1 induces its dissociation from E2Fs, thereby activating transcription of E2F responsive genes and triggering entry into S phase. RB1 also promotes the G0-G1 transition upon phosphorylation and activation by CDK3/cyclin-C. This Gallus gallus (Chicken) protein is Retinoblastoma-associated protein (RB1).